A 151-amino-acid chain; its full sequence is NADH-quinone oxidoreductase subunit I 2 (151 aa).

2 4Fe-4S ferredoxin-type domains span residues 49–82 (PRLN…VTSE) and 93–122 (VTFT…LTQD). Residues cysteine 62, cysteine 65, cysteine 68, cysteine 72, cysteine 102, cysteine 105, cysteine 108, and cysteine 112 each coordinate [4Fe-4S] cluster.

Belongs to the complex I 23 kDa subunit family. As to quaternary structure, NDH-1 is composed of 14 different subunits. Subunits NuoA, H, J, K, L, M, N constitute the membrane sector of the complex. The cofactor is [4Fe-4S] cluster.

The protein resides in the cell inner membrane. It catalyses the reaction a quinone + NADH + 5 H(+)(in) = a quinol + NAD(+) + 4 H(+)(out). NDH-1 shuttles electrons from NADH, via FMN and iron-sulfur (Fe-S) centers, to quinones in the respiratory chain. The immediate electron acceptor for the enzyme in this species is believed to be ubiquinone. Couples the redox reaction to proton translocation (for every two electrons transferred, four hydrogen ions are translocated across the cytoplasmic membrane), and thus conserves the redox energy in a proton gradient. In Solibacter usitatus (strain Ellin6076), this protein is NADH-quinone oxidoreductase subunit I 2.